The chain runs to 446 residues: Na(+)-translocating NADH-quinone reductase subunit A (446 aa).

Belongs to the NqrA family. As to quaternary structure, composed of six subunits; NqrA, NqrB, NqrC, NqrD, NqrE and NqrF.

It catalyses the reaction a ubiquinone + n Na(+)(in) + NADH + H(+) = a ubiquinol + n Na(+)(out) + NAD(+). In terms of biological role, NQR complex catalyzes the reduction of ubiquinone-1 to ubiquinol by two successive reactions, coupled with the transport of Na(+) ions from the cytoplasm to the periplasm. NqrA to NqrE are probably involved in the second step, the conversion of ubisemiquinone to ubiquinol. In Vibrio campbellii (strain ATCC BAA-1116), this protein is Na(+)-translocating NADH-quinone reductase subunit A.